Consider the following 605-residue polypeptide: Protein Spindly (605 aa).

At M1 the chain carries N-acetylmethionine. Residues 3 to 442 (TDIVINLRCK…ELKLKYEPEE (440 aa)) adopt a coiled-coil conformation. A phosphoserine mark is found at S513, S515, and S555. The segment at 545 to 581 (LSERSGNTLNSPRLAAESKLQTEVKEGKETASKLEKE) is disordered. Residues 564 to 581 (LQTEVKEGKETASKLEKE) are compositionally biased toward basic and acidic residues.

It belongs to the Spindly family. As to quaternary structure, interacts with KNTC1 and ZW10. These interactions appear weak and may be transient or indirect. Interacts with dynein intermediate chain and dynactin (DCTN1). Interacts with the catalytically active form of USP45. In terms of processing, monoubiquitinated with'Lys-48' linkage. Deubiquitinated by USP45.

It localises to the cytoplasm. The protein localises to the cytoskeleton. Its subcellular location is the microtubule organizing center. It is found in the centrosome. The protein resides in the chromosome. It localises to the centromere. The protein localises to the kinetochore. Its subcellular location is the nucleus. It is found in the spindle pole. Its function is as follows. Required for the localization of dynein and dynactin to the mitotic kintochore. Dynein is believed to control the initial lateral interaction between the kinetochore and spindle microtubules and to facilitate the subsequent formation of end-on kinetochore-microtubule attachments mediated by the NDC80 complex. Also required for correct spindle orientation. Does not appear to be required for the removal of spindle assembly checkpoint (SAC) proteins from the kinetochore upon bipolar spindle attachment. Acts as an adapter protein linking the dynein motor complex to various cargos and converts dynein from a non-processive to a highly processive motor in the presence of dynactin. Facilitates the interaction between dynein and dynactin and activates dynein processivity (the ability to move along a microtubule for a long distance without falling off the track). Plays a role in cell migration. The chain is Protein Spindly from Macaca fascicularis (Crab-eating macaque).